The following is a 344-amino-acid chain: Fructose-1,6-bisphosphatase class 1 (344 aa).

Mg(2+)-binding residues include Glu-92, Asp-115, Leu-117, and Asp-118. Residues 118-121, Asn-211, Tyr-244, and Lys-274 contribute to the substrate site; that span reads DGSS. A Mg(2+)-binding site is contributed by Glu-280.

Belongs to the FBPase class 1 family. Homotetramer. Mg(2+) is required as a cofactor.

Its subcellular location is the cytoplasm. The catalysed reaction is beta-D-fructose 1,6-bisphosphate + H2O = beta-D-fructose 6-phosphate + phosphate. Its pathway is carbohydrate biosynthesis; gluconeogenesis. This is Fructose-1,6-bisphosphatase class 1 from Aeromonas hydrophila subsp. hydrophila (strain ATCC 7966 / DSM 30187 / BCRC 13018 / CCUG 14551 / JCM 1027 / KCTC 2358 / NCIMB 9240 / NCTC 8049).